The following is a 493-amino-acid chain: Glutamyl-tRNA(Gln) amidotransferase subunit A (493 aa).

Active-site charge relay system residues include Lys79 and Ser159. Residue Ser183 is the Acyl-ester intermediate of the active site.

The protein belongs to the amidase family. GatA subfamily. Heterotrimer of A, B and C subunits.

It catalyses the reaction L-glutamyl-tRNA(Gln) + L-glutamine + ATP + H2O = L-glutaminyl-tRNA(Gln) + L-glutamate + ADP + phosphate + H(+). Functionally, allows the formation of correctly charged Gln-tRNA(Gln) through the transamidation of misacylated Glu-tRNA(Gln) in organisms which lack glutaminyl-tRNA synthetase. The reaction takes place in the presence of glutamine and ATP through an activated gamma-phospho-Glu-tRNA(Gln). This chain is Glutamyl-tRNA(Gln) amidotransferase subunit A, found in Brucella ovis (strain ATCC 25840 / 63/290 / NCTC 10512).